Consider the following 492-residue polypeptide: Amphoterin-induced protein 1 (492 aa).

Positions 1-27 (MQPQRDLRGLWLLLLSVFLLLFEVARA) are cleaved as a signal peptide. Residues 28–61 (GRSVVSCPANCLCASNILSCSKQQLPNVPQSLPS) enclose the LRRNT domain. Topologically, residues 28–371 (GRSVVSCPAN…LHGHHDTLNT (344 aa)) are extracellular. Cystine bridges form between cysteine 34-cysteine 40 and cysteine 38-cysteine 47. 6 LRR repeats span residues 62–83 (YTAL…WTPT), 87–108 (NLHS…AFVP), 111–132 (NLRY…LFSD), 135–156 (ALEV…AFED), 159–180 (QLQK…LIKD), and 186–206 (KLML…TDLQ). A glycan (N-linked (GlcNAc...) asparagine) is linked at asparagine 72. Positions 208 to 272 (LPAWVKNGLY…FSLDFFNCSE (65 aa)) constitute an LRRCT domain. 3 disulfide bridges follow: cysteine 225-cysteine 253, cysteine 227-cysteine 270, and cysteine 290-cysteine 340. Asparagine 269, asparagine 315, asparagine 348, and asparagine 359 each carry an N-linked (GlcNAc...) asparagine glycan. The Ig-like C2-type domain maps to 269–352 (NCSEYKESAW…MGETFNETLS (84 aa)). A helical membrane pass occupies residues 372 to 392 (AYTTLVGCILSVVLVLIYLYL). The Cytoplasmic portion of the chain corresponds to 393 to 492 (TPCRCWCRGV…SVFSDTPIVV (100 aa)). The interval 404–492 (KPSSHQGDSL…SVFSDTPIVV (89 aa)) is disordered. The segment covering 407 to 423 (SHQGDSLSSSMLSTTPN) has biased composition (polar residues). Basic and acidic residues predominate over residues 430–441 (GDKDDGFDRRVA). Phosphoserine is present on residues serine 476 and serine 480.

It belongs to the immunoglobulin superfamily. AMIGO family. As to quaternary structure, homodimer, and heterodimer with AMIGO2 and AMIGO3. Interacts with KCNB1. In terms of tissue distribution, expressed in hippocampal and cortical neurons (at protein level). High levels in cerebellum, cerebrum, and retina. Low levels in liver, kidney, small intestine, spleen, lung and heart.

Its subcellular location is the cell membrane. It localises to the perikaryon. The protein localises to the cell projection. It is found in the dendrite. In terms of biological role, promotes growth and fasciculation of neurites from cultured hippocampal neurons. May be involved in fasciculation as well as myelination of developing neural axons. May have a role in regeneration as well as neural plasticity in the adult nervous system. May mediate homophilic as well as heterophilic cell-cell interaction and contribute to signal transduction through its intracellular domain. Assembled with KCNB1 modulates the gating characteristics of the delayed rectifier voltage-dependent potassium channel KCNB1. The sequence is that of Amphoterin-induced protein 1 from Mus musculus (Mouse).